We begin with the raw amino-acid sequence, 274 residues long: ATP synthase subunit a (274 aa).

Helical transmembrane passes span 43-63, 103-123, 149-169, 223-243, and 245-265; these read TLNI…LLVF, VIAP…MMDL, DVSI…FYSI, LIFI…LSVP, and AIFH…LTIV.

This sequence belongs to the ATPase A chain family. In terms of assembly, F-type ATPases have 2 components, CF(1) - the catalytic core - and CF(0) - the membrane proton channel. CF(1) has five subunits: alpha(3), beta(3), gamma(1), delta(1), epsilon(1). CF(0) has three main subunits: a(1), b(2) and c(9-12). The alpha and beta chains form an alternating ring which encloses part of the gamma chain. CF(1) is attached to CF(0) by a central stalk formed by the gamma and epsilon chains, while a peripheral stalk is formed by the delta and b chains.

The protein localises to the cell inner membrane. Key component of the proton channel; it plays a direct role in the translocation of protons across the membrane. The protein is ATP synthase subunit a of Yersinia pestis bv. Antiqua (strain Angola).